Reading from the N-terminus, the 389-residue chain is Probable dual-specificity RNA methyltransferase RlmN (389 aa).

A disordered region spans residues 1–23 (MTTQHPDTPETGITPGGTSGAFR). E127 acts as the Proton acceptor in catalysis. The 244-residue stretch at 133 to 376 (YPTRTTLCIS…ATLRDTRGQD (244 aa)) folds into the Radical SAM core domain. C140 and C381 are oxidised to a cystine. Residues C147, C151, and C154 each coordinate [4Fe-4S] cluster. Residues 202–203 (GE), S236, 259–261 (SLH), and N338 each bind S-adenosyl-L-methionine. C381 functions as the S-methylcysteine intermediate in the catalytic mechanism.

The protein belongs to the radical SAM superfamily. RlmN family. [4Fe-4S] cluster is required as a cofactor.

The protein localises to the cytoplasm. It catalyses the reaction adenosine(2503) in 23S rRNA + 2 reduced [2Fe-2S]-[ferredoxin] + 2 S-adenosyl-L-methionine = 2-methyladenosine(2503) in 23S rRNA + 5'-deoxyadenosine + L-methionine + 2 oxidized [2Fe-2S]-[ferredoxin] + S-adenosyl-L-homocysteine. The enzyme catalyses adenosine(37) in tRNA + 2 reduced [2Fe-2S]-[ferredoxin] + 2 S-adenosyl-L-methionine = 2-methyladenosine(37) in tRNA + 5'-deoxyadenosine + L-methionine + 2 oxidized [2Fe-2S]-[ferredoxin] + S-adenosyl-L-homocysteine. Its function is as follows. Specifically methylates position 2 of adenine 2503 in 23S rRNA and position 2 of adenine 37 in tRNAs. This chain is Probable dual-specificity RNA methyltransferase RlmN, found in Bifidobacterium longum (strain NCC 2705).